Here is a 149-residue protein sequence, read N- to C-terminus: MKSACKPHGPPAGARGAPPCAGAAERAVSCAGPGRLESAARRRLAANARERRRMQGLNTAFDRLRRVVPQWGQDKKLSKYETLQMALSYIIALTRILAEAERDWVGLRCEQRGRDHPYLPFPGARLQVDPEPYGQRLFGFQPEPFPMAS.

Positions 41 to 93 constitute a bHLH domain; that stretch reads RRRLAANARERRRMQGLNTAFDRLRRVVPQWGQDKKLSKYETLQMALSYIIAL.

As to quaternary structure, forms a heterodimer with TCF3 isoform E47; interaction may be required for DNA-binding in certain situations. As to expression, expressed in retinal ganglion cells. Expressed in the cerebellum, trapezoid body, ventral nucleus of the lateral lamniscus and in areas of the auditory hindbrain such as the cochlear nucleus, lateral superior olive and medial nucleus of the trapezoid body. Expressed in the modiolar nerve root and in the cochlear in a small group of bushy neurons within the acoustic nerve. Expressed weakly in the sensory epithelia of the saccule and utricle.

Its subcellular location is the nucleus. The protein resides in the perikaryon. It is found in the cell projection. The protein localises to the axon. Its function is as follows. Transcription factor that binds to DNA at the consensus sequence 5'-CAG[GC]TG-3'. Dimerization with TCF3 isoform E47 may be required in certain situations. Binds to gene promoters and enhancer elements, and thereby regulates a transcriptional program of retinal ganglion cell (RGC) determinant genes. Although the exact mechanism is not certain, retinal transcription regulation by ATOH7 has a role in RGC determination and survival, photoreceptor population development, targeting of RGC axons to the optic nerve and development of the retino-hypothalamic tract. Binds to its own promoter and enhancer sequences, suggesting autoregulation of ATOH7 transcription. Required for retinal circadian rhythm photoentrainment. Plays a role in brainstem auditory signaling and binaural processing. In Mus musculus (Mouse), this protein is Transcription factor Atoh7.